The primary structure comprises 488 residues: Acetyl-CoA decarbonylase/synthase complex subunit gamma (488 aa).

One can recognise a 4Fe-4S domain in the interval Met1–Glu61. Cys19, Cys22, Cys27, and Cys44 together coordinate [4Fe-4S] cluster.

Heterodimer of delta and gamma chains. The ACDS complex is made up of alpha, epsilon, beta, gamma and delta chains with a probable stoichiometry of (alpha(2)epsilon(2))(4)-beta(8)-(gamma(1)delta(1))(8). Corrinoid is required as a cofactor. The cofactor is [4Fe-4S] cluster.

The catalysed reaction is 5,6,7,8-tetrahydrosarcinapterin + methyl-Co(III)-[corrinoid Fe-S protein] = 5-methyltetrahydrosarcinapterin + Co(I)-[corrinoid Fe-S protein] + H(+). Part of a complex that catalyzes the reversible cleavage of acetyl-CoA, allowing autotrophic growth from CO(2). The chain is Acetyl-CoA decarbonylase/synthase complex subunit gamma from Methanocaldococcus jannaschii (strain ATCC 43067 / DSM 2661 / JAL-1 / JCM 10045 / NBRC 100440) (Methanococcus jannaschii).